A 414-amino-acid polypeptide reads, in one-letter code: Imidazolonepropionase (414 aa).

Fe(3+) contacts are provided by His-95 and His-97. His-95 and His-97 together coordinate Zn(2+). Residues Arg-104, Tyr-162, and His-189 each contribute to the 4-imidazolone-5-propanoate site. N-formimidoyl-L-glutamate is bound at residue Tyr-162. His-252 lines the Fe(3+) pocket. His-252 is a binding site for Zn(2+). 4-imidazolone-5-propanoate is bound at residue Gln-255. Residue Asp-326 coordinates Fe(3+). Asp-326 is a Zn(2+) binding site. N-formimidoyl-L-glutamate contacts are provided by Asn-328 and Gly-330. Residue Ser-331 participates in 4-imidazolone-5-propanoate binding.

Belongs to the metallo-dependent hydrolases superfamily. HutI family. The cofactor is Zn(2+). Fe(3+) is required as a cofactor.

It localises to the cytoplasm. It catalyses the reaction 4-imidazolone-5-propanoate + H2O = N-formimidoyl-L-glutamate. Its pathway is amino-acid degradation; L-histidine degradation into L-glutamate; N-formimidoyl-L-glutamate from L-histidine: step 3/3. In terms of biological role, catalyzes the hydrolytic cleavage of the carbon-nitrogen bond in imidazolone-5-propanoate to yield N-formimidoyl-L-glutamate. It is the third step in the universal histidine degradation pathway. The sequence is that of Imidazolonepropionase from Streptomyces avermitilis (strain ATCC 31267 / DSM 46492 / JCM 5070 / NBRC 14893 / NCIMB 12804 / NRRL 8165 / MA-4680).